A 112-amino-acid chain; its full sequence is Iron-sulfur cluster assembly protein CyaY (112 aa).

It belongs to the frataxin family.

Its function is as follows. Involved in iron-sulfur (Fe-S) cluster assembly. May act as a regulator of Fe-S biogenesis. In Herminiimonas arsenicoxydans, this protein is Iron-sulfur cluster assembly protein CyaY.